A 228-amino-acid polypeptide reads, in one-letter code: Orotidine 5'-phosphate decarboxylase (228 aa).

Substrate is bound by residues Asp-10, Lys-33, 60-69 (DLKLYDIPHT), Thr-116, Arg-178, Gln-187, Gly-207, and Arg-208. The active-site Proton donor is the Lys-62.

This sequence belongs to the OMP decarboxylase family. Type 1 subfamily. Homodimer.

It catalyses the reaction orotidine 5'-phosphate + H(+) = UMP + CO2. The protein operates within pyrimidine metabolism; UMP biosynthesis via de novo pathway; UMP from orotate: step 2/2. Its function is as follows. Catalyzes the decarboxylation of orotidine 5'-monophosphate (OMP) to uridine 5'-monophosphate (UMP). This chain is Orotidine 5'-phosphate decarboxylase, found in Oenococcus oeni (strain ATCC BAA-331 / PSU-1).